We begin with the raw amino-acid sequence, 368 residues long: Polymerase delta-interacting protein 2 (368 aa).

A mitochondrion-targeting transit peptide spans 1-51 (MAACTARRALAVGSRWWSRSLTGARWPRPLCAAAGAGAFSPASTTTTRRHL). In terms of domain architecture, ApaG spans 235–360 (RETTENIRVT…FSLESNKDEK (126 aa)). The residue at position 292 (Thr-292) is a Phosphothreonine.

Interacts with PCNA and POLD2. Interacts with SSBP1. Interacts with PRIMPOL; leading to enhance DNA polymerase activity of PRIMPOL. Interacts with POLH. Interacts with POLD1; leading to stimulate DNA polymerase activity of POLD1.

Its subcellular location is the mitochondrion matrix. It localises to the nucleus. In terms of biological role, involved in DNA damage tolerance by regulating translesion synthesis (TLS) of templates carrying DNA damage lesions such as 8oxoG and abasic sites. May act by stimulating activity of DNA polymerases involved in TLS, such as PRIMPOL and polymerase delta (POLD1). This chain is Polymerase delta-interacting protein 2, found in Homo sapiens (Human).